The primary structure comprises 338 residues: Adenylosuccinate synthetase (338 aa).

GTP-binding positions include 12 to 18 (GDEGKGK) and 42 to 44 (GHT). Residue Asp13 is the Proton acceptor of the active site. Residues Asp13 and Gly42 each contribute to the Mg(2+) site. Residues 13 to 16 (DEGK), 40 to 43 (NAGH), Thr127, Arg141, Gln179, Thr194, and Arg256 each bind IMP. His43 acts as the Proton donor in catalysis. Residue 252 to 258 (TVTGRRR) participates in substrate binding. GTP-binding positions include Arg258, 284 to 286 (CLD), and 324 to 326 (STG).

The protein belongs to the adenylosuccinate synthetase family. Homodimer. The cofactor is Mg(2+).

It is found in the cytoplasm. The enzyme catalyses IMP + L-aspartate + GTP = N(6)-(1,2-dicarboxyethyl)-AMP + GDP + phosphate + 2 H(+). The protein operates within purine metabolism; AMP biosynthesis via de novo pathway; AMP from IMP: step 1/2. Plays an important role in the de novo pathway of purine nucleotide biosynthesis. Catalyzes the first committed step in the biosynthesis of AMP from IMP. The chain is Adenylosuccinate synthetase from Methanococcus vannielii (strain ATCC 35089 / DSM 1224 / JCM 13029 / OCM 148 / SB).